The sequence spans 264 residues: Small ribosomal subunit protein eS1B (264 aa).

Residues 1–19 show a composition bias toward basic residues; sequence MALGKNKRISKGGKRGKRG. Residues 1 to 23 form a disordered region; sequence MALGKNKRISKGGKRGKRGKAQE.

It belongs to the eukaryotic ribosomal protein eS1 family. Component of the small ribosomal subunit. Mature ribosomes consist of a small (40S) and a large (60S) subunit. The 40S subunit contains about 33 different proteins and 1 molecule of RNA (18S). The 60S subunit contains about 49 different proteins and 3 molecules of RNA (25S, 5.8S and 5S).

The protein localises to the cytoplasm. In Leishmania infantum, this protein is Small ribosomal subunit protein eS1B.